The chain runs to 223 residues: Type 3 secretion system stator protein (223 aa).

The protein belongs to the SctL stator family. In terms of assembly, the core secretion machinery of the T3SS is composed of approximately 20 different proteins, including cytoplasmic components, a base, an export apparatus and a needle. This subunit is part of the cytosolic complex. Interacts directly with YscN/SctN (T3SS ATPase) and YscQ/SctQ (the major sorting platform component). Forms homodimers.

It is found in the cytoplasm. Its function is as follows. Component of the type III secretion system (T3SS), also called injectisome, which is used to inject bacterial effector proteins into eukaryotic host cells. Acts as a regulator of the YscN/SctN ATPase activity. Overexpression of YscL/SctL abolishes type III secretion and down-regulates the expression of secretion apparatus components. This Yersinia enterocolitica protein is Type 3 secretion system stator protein.